A 384-amino-acid chain; its full sequence is tRNA-specific 2-thiouridylase MnmA (384 aa).

Residues 13-20 (GLSGGVDS) and Met39 contribute to the ATP site. The interaction with target base in tRNA stretch occupies residues 99–101 (NPD). Cys104 functions as the Nucleophile in the catalytic mechanism. A disulfide bridge links Cys104 with Cys215. Gly128 contacts ATP. Residues 165–167 (KDQ) are interaction with tRNA. Residue Cys215 is the Cysteine persulfide intermediate of the active site. The interval 333-334 (RY) is interaction with tRNA.

This sequence belongs to the MnmA/TRMU family.

The protein resides in the cytoplasm. It catalyses the reaction S-sulfanyl-L-cysteinyl-[protein] + uridine(34) in tRNA + AH2 + ATP = 2-thiouridine(34) in tRNA + L-cysteinyl-[protein] + A + AMP + diphosphate + H(+). Functionally, catalyzes the 2-thiolation of uridine at the wobble position (U34) of tRNA, leading to the formation of s(2)U34. The chain is tRNA-specific 2-thiouridylase MnmA from Albidiferax ferrireducens (strain ATCC BAA-621 / DSM 15236 / T118) (Rhodoferax ferrireducens).